The chain runs to 96 residues: Small ribosomal subunit protein uS17 (96 aa).

Belongs to the universal ribosomal protein uS17 family. In terms of assembly, part of the 30S ribosomal subunit.

In terms of biological role, one of the primary rRNA binding proteins, it binds specifically to the 5'-end of 16S ribosomal RNA. This chain is Small ribosomal subunit protein uS17, found in Deinococcus radiodurans (strain ATCC 13939 / DSM 20539 / JCM 16871 / CCUG 27074 / LMG 4051 / NBRC 15346 / NCIMB 9279 / VKM B-1422 / R1).